The primary structure comprises 330 residues: Probable cytosolic iron-sulfur protein assembly protein ciao1 (330 aa).

WD repeat units lie at residues His14–Lys53, Gly59–Leu98, Gly103–Cys142, Ser148–Arg187, Gly192–Ser231, Phe244–Gln283, and Ala295–Ala330.

It belongs to the WD repeat CIA1 family. In terms of assembly, component of the CIA complex.

Key component of the cytosolic iron-sulfur protein assembly (CIA) complex, a multiprotein complex that mediates the incorporation of iron-sulfur cluster into extramitochondrial Fe/S proteins. The chain is Probable cytosolic iron-sulfur protein assembly protein ciao1 (ciao1) from Danio rerio (Zebrafish).